The chain runs to 152 residues: Globin-1 subunit beta (152 aa).

Residue Ser-2 is modified to N-acetylserine. In terms of domain architecture, Globin spans 12 to 152; sequence VSNADQKDLL…SLVAVVQAAL (141 aa). 2 residues coordinate heme b: His-72 and His-104.

It belongs to the globin family. In terms of assembly, heterotetramer of two alpha chains and two beta chains.

The chain is Globin-1 subunit beta from Anadara trapezia (Sydney cockle).